Here is a 735-residue protein sequence, read N- to C-terminus: Ion-translocating oxidoreductase complex subunit C (735 aa).

4Fe-4S ferredoxin-type domains are found at residues 368 to 397 (MGAPQEEKSCIRCSACADACPADLLPQQLY) and 407 to 436 (KATAHHIADCIECGACAWVCPSNIPLVQYF). [4Fe-4S] cluster is bound by residues cysteine 377, cysteine 380, cysteine 383, cysteine 387, cysteine 416, cysteine 419, cysteine 422, and cysteine 426. The tract at residues 534–716 (QARAKQAAHP…ADPRKAAVAA (183 aa)) is disordered.

This sequence belongs to the 4Fe4S bacterial-type ferredoxin family. RnfC subfamily. In terms of assembly, the complex is composed of six subunits: RsxA, RsxB, RsxC, RsxD, RsxE and RsxG. [4Fe-4S] cluster serves as cofactor.

Its subcellular location is the cell inner membrane. In terms of biological role, part of a membrane-bound complex that couples electron transfer with translocation of ions across the membrane. Required to maintain the reduced state of SoxR. The chain is Ion-translocating oxidoreductase complex subunit C from Salmonella agona (strain SL483).